The chain runs to 233 residues: Biosynthetic peptidoglycan transglycosylase (233 aa).

The chain crosses the membrane as a helical span at residues 7–27 (VFTWLAKLVLGLFFASILSVV).

Belongs to the glycosyltransferase 51 family.

It localises to the cell inner membrane. The enzyme catalyses [GlcNAc-(1-&gt;4)-Mur2Ac(oyl-L-Ala-gamma-D-Glu-L-Lys-D-Ala-D-Ala)](n)-di-trans,octa-cis-undecaprenyl diphosphate + beta-D-GlcNAc-(1-&gt;4)-Mur2Ac(oyl-L-Ala-gamma-D-Glu-L-Lys-D-Ala-D-Ala)-di-trans,octa-cis-undecaprenyl diphosphate = [GlcNAc-(1-&gt;4)-Mur2Ac(oyl-L-Ala-gamma-D-Glu-L-Lys-D-Ala-D-Ala)](n+1)-di-trans,octa-cis-undecaprenyl diphosphate + di-trans,octa-cis-undecaprenyl diphosphate + H(+). Its pathway is cell wall biogenesis; peptidoglycan biosynthesis. Its function is as follows. Peptidoglycan polymerase that catalyzes glycan chain elongation from lipid-linked precursors. This Shewanella oneidensis (strain ATCC 700550 / JCM 31522 / CIP 106686 / LMG 19005 / NCIMB 14063 / MR-1) protein is Biosynthetic peptidoglycan transglycosylase.